Consider the following 706-residue polypeptide: Termination factor NPH-I homolog (706 aa).

Residues 62 to 227 (IGQGENTRGL…VPCFNMLSGR (166 aa)) form the Helicase ATP-binding domain. ATP is bound at residue 75-82 (HQMGMGKT). The DEAH box motif lies at 168-171 (DEAH). Residues 417–599 (QCLQPLKVLE…HLNSAFRDLL (183 aa)) enclose the Helicase C-terminal domain.

Belongs to the DEAD box helicase family. DEAH subfamily. In terms of assembly, part of the viral DNA-directed RNA polymerase that consists of 8 polII-like subunits (RPB1, RPB2, RPB3, RPB5, RPB6, RPB7, RPB9, RPB10), a capping enzyme and a termination factor.

The protein resides in the virion. In terms of biological role, putative DNA-dependent ATPase required for providing the needed energy to achieve the termination of early transcripts. This is Termination factor NPH-I homolog from African swine fever virus (isolate Tick/South Africa/Pretoriuskop Pr4/1996) (ASFV).